The primary structure comprises 358 residues: Mannonate dehydratase (358 aa).

Belongs to the mannonate dehydratase family. It depends on Fe(2+) as a cofactor. Mn(2+) serves as cofactor.

It catalyses the reaction D-mannonate = 2-dehydro-3-deoxy-D-gluconate + H2O. It functions in the pathway carbohydrate metabolism; pentose and glucuronate interconversion. Catalyzes the dehydration of D-mannonate. The sequence is that of Mannonate dehydratase from Lachnoclostridium phytofermentans (strain ATCC 700394 / DSM 18823 / ISDg) (Clostridium phytofermentans).